The primary structure comprises 286 residues: Translocon-associated protein subunit alpha (286 aa).

A signal peptide spans 1 to 20 (MSSLRRLLLLLLLVFPATLL). Residues 21–207 (LRVGPGGSLA…EREDGLDGET (187 aa)) are Lumenal-facing. Residues 37–75 (EDEETVEDSIIEDEDDEAEVEEDEPTDLAEDKEEDDVSG) are compositionally biased toward acidic residues. The disordered stretch occupies residues 37–83 (EDEETVEDSIIEDEDDEAEVEEDEPTDLAEDKEEDDVSGEPEASPSA). Asn-136 and Asn-191 each carry an N-linked (GlcNAc...) asparagine glycan. A helical membrane pass occupies residues 208 to 228 (IFMYMFLAGLGLLVVVGLHQL). Residues 229 to 286 (LESRKRKRPIQKVEMGTSSQNDVDMSWIPQETLNQINKASPRRLPRKRAQKRSVGSDE) are Cytoplasmic-facing. At Ser-247 the chain carries Phosphoserine. Position 260 is a phosphothreonine (Thr-260). Positions 261-286 (LNQINKASPRRLPRKRAQKRSVGSDE) are disordered. Ser-268 bears the Phosphoserine mark. Over residues 268 to 279 (SPRRLPRKRAQK) the composition is skewed to basic residues.

This sequence belongs to the TRAP-alpha family. Heterotetramer of TRAP-alpha, TRAP-beta, TRAP-delta and TRAP-gamma. Interacts with palmitoylated calnexin (CALX), the interaction is required for efficient folding of glycosylated proteins. Phosphorylated in its cytoplasmic tail.

It localises to the endoplasmic reticulum membrane. In terms of biological role, TRAP proteins are part of a complex whose function is to bind calcium to the ER membrane and thereby regulate the retention of ER resident proteins. May be involved in the recycling of the translocation apparatus after completion of the translocation process or may function as a membrane-bound chaperone facilitating folding of translocated proteins. In Bos taurus (Bovine), this protein is Translocon-associated protein subunit alpha (SSR1).